Consider the following 837-residue polypeptide: Ubiquitin carboxyl-terminal hydrolase A (837 aa).

Residues 166-277 (PSAFAESIIQ…QHLTHWGLNP (112 aa)) form a UBP-type; degenerate zinc finger. Residues 319 to 835 (TGIENLGNSC…LGYIYFYKRQ (517 aa)) enclose the USP domain. C328 functions as the Nucleophile in the catalytic mechanism. Residues 628–669 (SFNQEVLDTLLSMDFPLVRCKKALLATGGKDAELAMNWIFEH) enclose the UBA 1 domain. The tract at residues 676–695 (DIEQTPVNNNNNNNNSSNSN) is disordered. Residues 683–695 (NNNNNNNNSSNSN) show a composition bias toward low complexity. The UBA 2 domain occupies 700–740 (VFNSQDVDNIIGMGFTDSQAKLALKNTKGNLERAADWLFSH). H797 (proton acceptor) is an active-site residue.

It belongs to the peptidase C19 family.

The catalysed reaction is Thiol-dependent hydrolysis of ester, thioester, amide, peptide and isopeptide bonds formed by the C-terminal Gly of ubiquitin (a 76-residue protein attached to proteins as an intracellular targeting signal).. In terms of biological role, required for development but not growth. This chain is Ubiquitin carboxyl-terminal hydrolase A (ubpA), found in Dictyostelium discoideum (Social amoeba).